A 390-amino-acid chain; its full sequence is UPF0496 protein At1g20180 (390 aa).

The next 2 membrane-spanning stretches (helical) occupy residues 228-248 (LGGY…LIIA) and 250-270 (HSIL…FCLL).

This sequence belongs to the UPF0496 family.

It localises to the membrane. This is UPF0496 protein At1g20180 from Arabidopsis thaliana (Mouse-ear cress).